The sequence spans 474 residues: Trehalose-6-phosphate synthase (474 aa).

Residue Arg-10 coordinates D-glucose 6-phosphate. 22–23 (GG) is a UDP-alpha-D-glucose binding site. D-glucose 6-phosphate-binding residues include Tyr-77 and Asp-131. The UDP-alpha-D-glucose site is built by Arg-263 and Lys-268. Residue Arg-301 coordinates D-glucose 6-phosphate. UDP-alpha-D-glucose contacts are provided by residues Phe-340 and 366–370 (LVAKE).

This sequence belongs to the glycosyltransferase 20 family. As to quaternary structure, homotetramer.

It carries out the reaction D-glucose 6-phosphate + UDP-alpha-D-glucose = alpha,alpha-trehalose 6-phosphate + UDP + H(+). It functions in the pathway glycan biosynthesis; trehalose biosynthesis. Functionally, probably involved in the osmoprotection via the biosynthesis of trehalose. Catalyzes the transfer of glucose from UDP-alpha-D-glucose (UDP-Glc) to D-glucose 6-phosphate (Glc-6-P) to form trehalose-6-phosphate. Acts with retention of the anomeric configuration of the UDP-sugar donor. In Cronobacter sakazakii (strain ATCC BAA-894) (Enterobacter sakazakii), this protein is Trehalose-6-phosphate synthase.